The chain runs to 89 residues: Small ribosomal subunit protein bS20 (89 aa).

Positions 1–12 are enriched in basic residues; the sequence is MANIKSAKKRAK. Residues 1–22 form a disordered region; that stretch reads MANIKSAKKRAKQTIVRNERNT.

This sequence belongs to the bacterial ribosomal protein bS20 family.

Its function is as follows. Binds directly to 16S ribosomal RNA. The chain is Small ribosomal subunit protein bS20 from Xanthomonas oryzae pv. oryzae (strain KACC10331 / KXO85).